The sequence spans 475 residues: Glycogen synthase (475 aa).

An ADP-alpha-D-glucose-binding site is contributed by lysine 15.

It belongs to the glycosyltransferase 1 family. Bacterial/plant glycogen synthase subfamily.

The catalysed reaction is [(1-&gt;4)-alpha-D-glucosyl](n) + ADP-alpha-D-glucose = [(1-&gt;4)-alpha-D-glucosyl](n+1) + ADP + H(+). Its pathway is glycan biosynthesis; glycogen biosynthesis. Functionally, synthesizes alpha-1,4-glucan chains using ADP-glucose. The sequence is that of Glycogen synthase from Kosmotoga olearia (strain ATCC BAA-1733 / DSM 21960 / TBF 19.5.1).